The sequence spans 67 residues: Photosystem II reaction center protein H (67 aa).

The chain crosses the membrane as a helical span at residues 27–47 (GAVPVMAFIGVLLLVFLVILL).

This sequence belongs to the PsbH family. As to quaternary structure, PSII is composed of 1 copy each of membrane proteins PsbA, PsbB, PsbC, PsbD, PsbE, PsbF, PsbH, PsbI, PsbJ, PsbK, PsbL, PsbM, PsbT, PsbX, PsbY, Psb30/Ycf12, peripheral proteins PsbO, CyanoQ (PsbQ), PsbU, PsbV and a large number of cofactors. It forms dimeric complexes.

It is found in the cellular thylakoid membrane. Its function is as follows. One of the components of the core complex of photosystem II (PSII), required for its stability and/or assembly. PSII is a light-driven water:plastoquinone oxidoreductase that uses light energy to abstract electrons from H(2)O, generating O(2) and a proton gradient subsequently used for ATP formation. It consists of a core antenna complex that captures photons, and an electron transfer chain that converts photonic excitation into a charge separation. The polypeptide is Photosystem II reaction center protein H (Prochlorococcus marinus (strain MIT 9211)).